Here is a 606-residue protein sequence, read N- to C-terminus: Threonine dehydratase 1 biosynthetic, chloroplastic (606 aa).

The residue at position 154 (lysine 154) is an N6-(pyridoxal phosphate)lysine. ACT-like domains follow at residues 432-504 (AVLA…NLTD) and 526-597 (LLCR…MESL).

This sequence belongs to the serine/threonine dehydratase family. Pyridoxal 5'-phosphate serves as cofactor. Expressed constitutively in all tissues examined including root, stem, petiole, leaf, immature flower bud, unopened flower and opened flower with the highest expression in opened flower and lowest in leaf.

Its subcellular location is the plastid. It is found in the chloroplast. The enzyme catalyses L-threonine = 2-oxobutanoate + NH4(+). It participates in amino-acid biosynthesis; L-isoleucine biosynthesis; 2-oxobutanoate from L-threonine: step 1/1. Strongly inhibited by 1 mM isoleucine. In terms of biological role, has a housekeeping role in isoleucine biosynthesis. The protein is Threonine dehydratase 1 biosynthetic, chloroplastic of Solanum lycopersicum (Tomato).